A 166-amino-acid chain; its full sequence is Ferric nitrobindin-like protein (166 aa).

A GXWXGXG motif is present at residues 21–27; it reads GHWEGEG.

This sequence belongs to the nitrobindin family.

This Cutibacterium acnes (strain DSM 16379 / KPA171202) (Propionibacterium acnes) protein is Ferric nitrobindin-like protein.